The sequence spans 201 residues: ATP-dependent Clp protease proteolytic subunit (201 aa).

The Nucleophile role is filled by Ser-98. His-123 is a catalytic residue.

It belongs to the peptidase S14 family. Fourteen ClpP subunits assemble into 2 heptameric rings which stack back to back to give a disk-like structure with a central cavity, resembling the structure of eukaryotic proteasomes.

It is found in the cytoplasm. The enzyme catalyses Hydrolysis of proteins to small peptides in the presence of ATP and magnesium. alpha-casein is the usual test substrate. In the absence of ATP, only oligopeptides shorter than five residues are hydrolyzed (such as succinyl-Leu-Tyr-|-NHMec, and Leu-Tyr-Leu-|-Tyr-Trp, in which cleavage of the -Tyr-|-Leu- and -Tyr-|-Trp bonds also occurs).. Functionally, cleaves peptides in various proteins in a process that requires ATP hydrolysis. Has a chymotrypsin-like activity. Plays a major role in the degradation of misfolded proteins. In Rickettsia conorii (strain ATCC VR-613 / Malish 7), this protein is ATP-dependent Clp protease proteolytic subunit.